We begin with the raw amino-acid sequence, 319 residues long: tRNA N6-adenosine threonylcarbamoyltransferase (319 aa).

Residues His110 and His114 each coordinate Fe cation. Substrate is bound by residues 135–139, Asp168, Gly181, Asp185, and Asn277; that span reads VVSGG. Asp301 provides a ligand contact to Fe cation.

This sequence belongs to the KAE1 / TsaD family. Fe(2+) is required as a cofactor.

The protein localises to the cytoplasm. It catalyses the reaction L-threonylcarbamoyladenylate + adenosine(37) in tRNA = N(6)-L-threonylcarbamoyladenosine(37) in tRNA + AMP + H(+). In terms of biological role, required for the formation of a threonylcarbamoyl group on adenosine at position 37 (t(6)A37) in tRNAs that read codons beginning with adenine. Is involved in the transfer of the threonylcarbamoyl moiety of threonylcarbamoyl-AMP (TC-AMP) to the N6 group of A37, together with TsaE and TsaB. TsaD likely plays a direct catalytic role in this reaction. The polypeptide is tRNA N6-adenosine threonylcarbamoyltransferase (Mycoplasma pneumoniae (strain ATCC 29342 / M129 / Subtype 1) (Mycoplasmoides pneumoniae)).